We begin with the raw amino-acid sequence, 253 residues long: A-type ATP synthase subunit B (253 aa).

This sequence belongs to the ATPase alpha/beta chains family. Has multiple subunits with at least A(3), B(3), C, D, E, F, H, I and proteolipid K(x).

The protein localises to the cell membrane. In terms of biological role, component of the A-type ATP synthase that produces ATP from ADP in the presence of a proton gradient across the membrane. The B chain is a regulatory subunit. The polypeptide is A-type ATP synthase subunit B (Methanothermococcus thermolithotrophicus (Methanococcus thermolithotrophicus)).